Consider the following 253-residue polypeptide: 2,3-bisphosphoglycerate-dependent phosphoglycerate mutase (253 aa).

Residues 12 to 19, 25 to 26, Arg64, 91 to 94, Lys102, and 118 to 119 each bind substrate; these read RHGESEWN, TG, ERHY, and RR. His13 acts as the Tele-phosphohistidine intermediate in catalysis. Glu91 (proton donor/acceptor) is an active-site residue. A disordered region spans residues 126–148; the sequence is PPLADGSEFSQSDDPRYASIPPE. 187–188 is a substrate binding site; the sequence is GN.

Belongs to the phosphoglycerate mutase family. BPG-dependent PGAM subfamily.

It catalyses the reaction (2R)-2-phosphoglycerate = (2R)-3-phosphoglycerate. Its pathway is carbohydrate degradation; glycolysis; pyruvate from D-glyceraldehyde 3-phosphate: step 3/5. In terms of biological role, catalyzes the interconversion of 2-phosphoglycerate and 3-phosphoglycerate. The sequence is that of 2,3-bisphosphoglycerate-dependent phosphoglycerate mutase from Streptomyces avermitilis (strain ATCC 31267 / DSM 46492 / JCM 5070 / NBRC 14893 / NCIMB 12804 / NRRL 8165 / MA-4680).